The chain runs to 899 residues: Pre-mRNA-splicing factor 6 (899 aa).

Positions 1–65 are disordered; that stretch reads MERPSFLDQE…QSQPKDDEDD (65 aa). Basic and acidic residues predominate over residues 28–51; sequence TKEKQVVSNDDKGRRIPKRYRENL. HAT repeat units follow at residues 221 to 253, 255 to 287, 289 to 318, 319 to 350, 352 to 381, 383 to 414, 493 to 525, 545 to 578, 608 to 645, 648 to 680, 682 to 714, 751 to 783, and 819 to 851; these read EDLQ…LEEK, RKFS…LHES, VHYC…DLES, TTVN…FEAD, AQVI…LQSY, NAKM…RNNP, PHSK…ATES, NSDD…DTRQ, LQLD…FLRY, LNEE…IYHS, GNIE…IDEI, GNLD…LFKH, and AQYE…TYAR.

Component of the U4/U6-U5 tri-snRNP complex composed of the U4, U6 and U5 snRNAs and at least PRP3, PRP4, PRP6, PRP8, PRP18, PRP31, PRP38, SNU13, SNU23, SNU66, SNU114, SPP381, SMB1, SMD1, SMD2, SMD3, SMX2, SMX3, LSM2, LSM3, LSM4, LSM5, LSM6, LSM7, LSM8, BRR2 and DIB1.

Its subcellular location is the nucleus. Its function is as follows. Participates in pre-mRNA splicing. Part of the U4/U5/U6 tri-snRNP complex, one of the building blocks of the spliceosome. The sequence is that of Pre-mRNA-splicing factor 6 (PRP6) from Saccharomyces cerevisiae (strain ATCC 204508 / S288c) (Baker's yeast).